The sequence spans 263 residues: MQPELLLFDIGNTSIKIGLAHERQVVTSYTLRTDAGQTADDLGLKLATLLGHAGVTPQSLRACVASSVVPGFDPLLREAVARYVDCPLYRVGADLSVPLENRYERPAEVGADRLVGAYAARRLYPEFPGLLVVDFGTAVTIDCVNGNAYMGGLIFPGPRTALSALSREAAKLPRVNLDVRADEPTPGRSTATSIQHGLVFGFACMVEGLAQRLKRQLPGPARVLGTGGFAASIARVSPVFDHVLPALLLEGLRRLYYEERTAF.

Position 9 to 16 (9 to 16 (DIGNTSIK)) interacts with ATP. Substrate is bound by residues Tyr-103 and 110–113 (GADR). Asp-112 (proton acceptor) is an active-site residue. Asp-134 lines the K(+) pocket. Thr-137 provides a ligand contact to ATP. Substrate is bound at residue Thr-190.

Belongs to the type III pantothenate kinase family. In terms of assembly, homodimer. NH4(+) is required as a cofactor. Requires K(+) as cofactor.

Its subcellular location is the cytoplasm. The enzyme catalyses (R)-pantothenate + ATP = (R)-4'-phosphopantothenate + ADP + H(+). It functions in the pathway cofactor biosynthesis; coenzyme A biosynthesis; CoA from (R)-pantothenate: step 1/5. In terms of biological role, catalyzes the phosphorylation of pantothenate (Pan), the first step in CoA biosynthesis. The chain is Type III pantothenate kinase from Desulfovibrio desulfuricans (strain ATCC 27774 / DSM 6949 / MB).